A 159-amino-acid chain; its full sequence is Ribonuclease H (159 aa).

One can recognise an RNase H type-1 domain in the interval 4–145 (THKQVNIYTD…CDKLARDAAE (142 aa)). Asp13, Glu51, Asp73, and Asp137 together coordinate Mg(2+).

The protein belongs to the RNase H family. Monomer. Mg(2+) serves as cofactor.

The protein resides in the cytoplasm. It catalyses the reaction Endonucleolytic cleavage to 5'-phosphomonoester.. In terms of biological role, endonuclease that specifically degrades the RNA of RNA-DNA hybrids. This is Ribonuclease H from Shewanella denitrificans (strain OS217 / ATCC BAA-1090 / DSM 15013).